Reading from the N-terminus, the 360-residue chain is Protein Wnt-5b (360 aa).

The signal sequence occupies residues 1 to 16 (MTPILRLLLLSSLLSC). A disulfide bridge connects residues Cys84 and Cys95. Residues Asn94 and Asn100 are each glycosylated (N-linked (GlcNAc...) asparagine). Intrachain disulfides connect Cys134-Cys142, Cys144-Cys162, Cys218-Cys232, Cys220-Cys227, Cys289-Cys320, Cys305-Cys315, Cys319-Cys359, Cys335-Cys350, Cys337-Cys347, and Cys342-Cys343. Ser224 carries O-palmitoleoyl serine; by PORCN lipidation. N-linked (GlcNAc...) asparagine glycans are attached at residues Asn292 and Asn306.

It belongs to the Wnt family. Post-translationally, palmitoleoylation is required for efficient binding to frizzled receptors. Depalmitoleoylation leads to Wnt signaling pathway inhibition.

Its subcellular location is the secreted. It localises to the extracellular space. The protein resides in the extracellular matrix. In terms of biological role, ligand for members of the frizzled family of seven transmembrane receptors. Probable developmental protein. May be a signaling molecule which affects the development of discrete regions of tissues. Is likely to signal over only few cell diameters. The polypeptide is Protein Wnt-5b (wnt5b) (Xenopus laevis (African clawed frog)).